The primary structure comprises 124 residues: Small ribosomal subunit protein uS12 (124 aa).

D89 is subject to 3-methylthioaspartic acid. The segment at T104–K124 is disordered. The segment covering G111 to K124 has biased composition (basic residues).

This sequence belongs to the universal ribosomal protein uS12 family. Part of the 30S ribosomal subunit. Contacts proteins S8 and S17. May interact with IF1 in the 30S initiation complex.

With S4 and S5 plays an important role in translational accuracy. In terms of biological role, interacts with and stabilizes bases of the 16S rRNA that are involved in tRNA selection in the A site and with the mRNA backbone. Located at the interface of the 30S and 50S subunits, it traverses the body of the 30S subunit contacting proteins on the other side and probably holding the rRNA structure together. The combined cluster of proteins S8, S12 and S17 appears to hold together the shoulder and platform of the 30S subunit. This chain is Small ribosomal subunit protein uS12, found in Micrococcus luteus (strain ATCC 4698 / DSM 20030 / JCM 1464 / CCM 169 / CCUG 5858 / IAM 1056 / NBRC 3333 / NCIMB 9278 / NCTC 2665 / VKM Ac-2230) (Micrococcus lysodeikticus).